The primary structure comprises 325 residues: tRNA dimethylallyltransferase (325 aa).

Position 17 to 24 (17 to 24) interacts with ATP; the sequence is GPTASGKT. Position 19–24 (19–24) interacts with substrate; it reads TASGKT. Interaction with substrate tRNA regions lie at residues 42–45, 166–170, 251–256, and 284–291; these read DSAL, QRIQR, RCVGYR, and KRQITWLR.

It belongs to the IPP transferase family. As to quaternary structure, monomer. It depends on Mg(2+) as a cofactor.

It catalyses the reaction adenosine(37) in tRNA + dimethylallyl diphosphate = N(6)-dimethylallyladenosine(37) in tRNA + diphosphate. Its function is as follows. Catalyzes the transfer of a dimethylallyl group onto the adenine at position 37 in tRNAs that read codons beginning with uridine, leading to the formation of N6-(dimethylallyl)adenosine (i(6)A). The chain is tRNA dimethylallyltransferase from Burkholderia multivorans (strain ATCC 17616 / 249).